The chain runs to 255 residues: ParA family protein CPn_0805/CP_1066/CPj0805/CpB0834 (255 aa).

Belongs to the ParA family.

This Chlamydia pneumoniae (Chlamydophila pneumoniae) protein is ParA family protein CPn_0805/CP_1066/CPj0805/CpB0834.